We begin with the raw amino-acid sequence, 396 residues long: Stearoyl-[acyl-carrier-protein] 9-desaturase, chloroplastic (396 aa).

Residues 1 to 32 constitute a chloroplast transit peptide; the sequence is MALKLNPVTTFPSTRSLNNFSSRSPRTFLMAA. Residues Glu-138, Glu-176, His-179, Glu-229, Glu-262, and His-265 each contribute to the Fe cation site.

It belongs to the fatty acid desaturase type 2 family. Homodimer. The cofactor is Fe(2+).

It localises to the plastid. The protein resides in the chloroplast. The catalysed reaction is octadecanoyl-[ACP] + 2 reduced [2Fe-2S]-[ferredoxin] + O2 + 2 H(+) = (9Z)-octadecenoyl-[ACP] + 2 oxidized [2Fe-2S]-[ferredoxin] + 2 H2O. The protein operates within lipid metabolism; fatty acid metabolism. In terms of biological role, converts stearoyl-ACP to oleoyl-ACP by introduction of a cis double bond between carbons 9 and 10 of the acyl chain. This is Stearoyl-[acyl-carrier-protein] 9-desaturase, chloroplastic from Linum usitatissimum (Flax).